The sequence spans 284 residues: Pantothenate synthetase (284 aa).

30-37 (MGNLHEGH) provides a ligand contact to ATP. The Proton donor role is filled by His-37. Gln-61 provides a ligand contact to (R)-pantoate. Gln-61 is a binding site for beta-alanine. 149–152 (GEKD) provides a ligand contact to ATP. (R)-pantoate is bound at residue Gln-155. Residues Val-178 and 186–189 (LSSR) each bind ATP.

The protein belongs to the pantothenate synthetase family. As to quaternary structure, homodimer.

It localises to the cytoplasm. The enzyme catalyses (R)-pantoate + beta-alanine + ATP = (R)-pantothenate + AMP + diphosphate + H(+). It participates in cofactor biosynthesis; (R)-pantothenate biosynthesis; (R)-pantothenate from (R)-pantoate and beta-alanine: step 1/1. Functionally, catalyzes the condensation of pantoate with beta-alanine in an ATP-dependent reaction via a pantoyl-adenylate intermediate. This is Pantothenate synthetase from Yersinia enterocolitica serotype O:8 / biotype 1B (strain NCTC 13174 / 8081).